The sequence spans 172 residues: S-ribosylhomocysteine lyase (172 aa).

Fe cation-binding residues include His54, His58, and Cys128.

Belongs to the LuxS family. As to quaternary structure, homodimer. Requires Fe cation as cofactor.

The catalysed reaction is S-(5-deoxy-D-ribos-5-yl)-L-homocysteine = (S)-4,5-dihydroxypentane-2,3-dione + L-homocysteine. In terms of biological role, involved in the synthesis of autoinducer 2 (AI-2) which is secreted by bacteria and is used to communicate both the cell density and the metabolic potential of the environment. The regulation of gene expression in response to changes in cell density is called quorum sensing. Catalyzes the transformation of S-ribosylhomocysteine (RHC) to homocysteine (HC) and 4,5-dihydroxy-2,3-pentadione (DPD). The sequence is that of S-ribosylhomocysteine lyase from Vibrio alginolyticus.